The chain runs to 86 residues: Weak toxin 2 (86 aa).

The N-terminal stretch at 1-23 is a signal peptide; it reads MKTLLLTLVVVAIVCLDLGYTLT. Disulfide bonds link Cys-24/Cys-45, Cys-27/Cys-32, Cys-38/Cys-63, Cys-67/Cys-78, and Cys-79/Cys-84.

The protein belongs to the three-finger toxin family. Ancestral subfamily. Orphan group II sub-subfamily. As to expression, expressed by the venom gland.

It localises to the secreted. Functionally, binds with low affinity to muscular (alpha-1-beta-1-delta-epsilon/CHRNA1-CHRNB1-CHRND-CHRNE) and very low affinity to neuronal (alpha-7/CHRNA7) nicotinic acetylcholine receptor (nAChR). The sequence is that of Weak toxin 2 from Bungarus candidus (Malayan krait).